The sequence spans 604 residues: Transcriptional repressor rco-1 (604 aa).

Disordered stretches follow at residues 87-110 and 124-264; these read RGGAPGNMNPPPQHPGQQQPPAIG and GGQA…DRLP. Residues 144 to 163 show a composition bias toward pro residues; that stretch reads MPAPPGLQGPPPPPPPPSQQ. Low complexity-rich tracts occupy residues 164–177 and 190–209; these read PPFQQQYQGPQGPG and PGPAGKRGIGRPPAGGPATP. A compositionally biased stretch (polar residues) spans 210 to 229; it reads QINTPIPYNGGPAQSPQVPT. 7 WD repeats span residues 295–324, 342–372, 384–414, 425–455, 469–499, 523–553, and 565–600; these read QHESVVCCVRFSMDGKYVATGCNRSAQIYD, TGDLYIRSVCFSPDGKYLATGAEDKLIRVWD, GHEQDIYSLDFSRDGRTIASGSGDRTVRLWD, SIEDGVTTVAISPDKQFVAAGSLDKSVRVWD, GHKDSVYSVAFSPDGRNLVSGSLDKTIKMWE, GHRDFVLSVALTPDSQWVLSGSKDRGVQFWD, and GHKNSVISVAPSPVTGPNGVGYFATGSGDMRARIWS.

Its function is as follows. Represses transcription by RNA polymerase II. May be involved at several stages of conidiation and other growth and development processes. Appears to regulate genes that are expressed in asexual and sexual spore pathways. The chain is Transcriptional repressor rco-1 (rco-1) from Neurospora crassa (strain ATCC 24698 / 74-OR23-1A / CBS 708.71 / DSM 1257 / FGSC 987).